A 290-amino-acid chain; its full sequence is tRNA(Ile)-lysidine synthase (290 aa).

12–17 (SGGSDS) provides a ligand contact to ATP.

It belongs to the tRNA(Ile)-lysidine synthase family.

The protein localises to the cytoplasm. It catalyses the reaction cytidine(34) in tRNA(Ile2) + L-lysine + ATP = lysidine(34) in tRNA(Ile2) + AMP + diphosphate + H(+). Functionally, ligates lysine onto the cytidine present at position 34 of the AUA codon-specific tRNA(Ile) that contains the anticodon CAU, in an ATP-dependent manner. Cytidine is converted to lysidine, thus changing the amino acid specificity of the tRNA from methionine to isoleucine. The chain is tRNA(Ile)-lysidine synthase from Mycoplasma genitalium (strain ATCC 33530 / DSM 19775 / NCTC 10195 / G37) (Mycoplasmoides genitalium).